The following is a 248-amino-acid chain: Probable 2-oxo-3-(5-oxofuran-2-ylidene)propanoate lactonase (248 aa).

Residues Cys-123, Asp-180, and His-212 contribute to the active site.

Belongs to the dienelactone hydrolase family.

It carries out the reaction 2-oxo-3-(5-oxofuran-2-ylidene)propanoate + H2O = 3-maleylpyruvate + H(+). Involved in the 5-nitroanthranilic acid (5NAA) degradation. Catalyzes the hydrolysis of the lactone to produce maleylpyruvate biodegradation of 5-nitroanthranilate. The chain is Probable 2-oxo-3-(5-oxofuran-2-ylidene)propanoate lactonase (naaC) from Bradyrhizobium sp.